The primary structure comprises 691 residues: Putative calcium up-regulated protein I (691 aa).

The region spanning 47 to 174 (SNCYLKEKPQ…NYTSQIWTYN (128 aa)) is the Ricin B-type lectin domain.

Belongs to the cup family.

This Dictyostelium discoideum (Social amoeba) protein is Putative calcium up-regulated protein I (cupI).